The sequence spans 123 residues: UPF0295 protein Bcer98_0460 (123 aa).

The next 2 helical transmembrane spans lie at 12-32 (IRTFALSLVFIGLLIAYLGVF) and 43-63 (FMMLGFLAVLASTFVYFWIGM).

Belongs to the UPF0295 family.

Its subcellular location is the cell membrane. The protein is UPF0295 protein Bcer98_0460 of Bacillus cytotoxicus (strain DSM 22905 / CIP 110041 / 391-98 / NVH 391-98).